The sequence spans 134 residues: Small ribosomal subunit protein uS17c (134 aa).

Residues His1 to Ala37 constitute a chloroplast transit peptide. The disordered stretch occupies residues Phe106 to Glu134.

Belongs to the universal ribosomal protein uS17 family. As to quaternary structure, part of the 30S ribosomal subunit.

Its subcellular location is the plastid. The protein localises to the chloroplast. Functionally, one of the primary rRNA binding proteins, it binds specifically to the 5'-end of 16S ribosomal RNA. The sequence is that of Small ribosomal subunit protein uS17c (RPS17) from Pisum sativum (Garden pea).